A 93-amino-acid chain; its full sequence is Small ribosomal subunit protein bS20 (93 aa).

The span at 1 to 18 (MPLHKSAEKRLRQSEKRN) shows a compositional bias: basic and acidic residues. The tract at residues 1 to 25 (MPLHKSAEKRLRQSEKRNARNRARK) is disordered.

Belongs to the bacterial ribosomal protein bS20 family.

In terms of biological role, binds directly to 16S ribosomal RNA. In Chlorobium chlorochromatii (strain CaD3), this protein is Small ribosomal subunit protein bS20.